Here is a 711-residue protein sequence, read N- to C-terminus: Serine/threonine-protein kinase ATG1b (711 aa).

A Protein kinase domain is found at 20-277 (YAVGRQIGSG…FEEFFHHPFL (258 aa)). Residues 26-34 (IGSGSFSVV) and K49 contribute to the ATP site. D142 serves as the catalytic Proton acceptor. Disordered regions lie at residues 318–342 (LPFF…TSPM) and 383–419 (FEGH…SMDQ). Positions 383–393 (FEGHRLSDRSQ) are enriched in basic and acidic residues. Over residues 394–410 (FKPSSLPDSRSFSTQGR) the composition is skewed to polar residues. The AIM (Atg8-family-interacting motif) motif lies at 421–424 (YVLI).

Belongs to the protein kinase superfamily. Ser/Thr protein kinase family.

It is found in the cytoplasmic vesicle. Its subcellular location is the autophagosome. In terms of biological role, serine/threonine protein kinase involved in autophagy. The ATG1-ATG13 protein kinase complex regulates downstream events required for autophagosome enclosure and/or vacuolar delivery. This chain is Serine/threonine-protein kinase ATG1b, found in Arabidopsis thaliana (Mouse-ear cress).